The chain runs to 659 residues: Threonine--tRNA ligase (659 aa).

A TGS domain is found at 1 to 61 (MIDLIFPDGS…TPDLLGGGNR (61 aa)). Residues 249-541 (DHRKLGKTMD…LLENYAGHLP (293 aa)) form a catalytic region. 3 residues coordinate Zn(2+): C341, H392, and H518. The tract at residues 637 to 659 (EEATPPDLARDRAVAAPAELAQA) is disordered.

The protein belongs to the class-II aminoacyl-tRNA synthetase family. In terms of assembly, homodimer. Requires Zn(2+) as cofactor.

Its subcellular location is the cytoplasm. It carries out the reaction tRNA(Thr) + L-threonine + ATP = L-threonyl-tRNA(Thr) + AMP + diphosphate + H(+). Catalyzes the attachment of threonine to tRNA(Thr) in a two-step reaction: L-threonine is first activated by ATP to form Thr-AMP and then transferred to the acceptor end of tRNA(Thr). Also edits incorrectly charged L-seryl-tRNA(Thr). In Caulobacter sp. (strain K31), this protein is Threonine--tRNA ligase.